A 403-amino-acid chain; its full sequence is FAD-dependent monooxygenase tazP (403 aa).

Gly75, Arg144, Asp354, and Ala367 together coordinate FAD.

The protein belongs to the paxM FAD-dependent monooxygenase family. The cofactor is FAD.

Its pathway is secondary metabolite biosynthesis. Functionally, FAD-dependent monooxygenase; part of the gene cluster that mediates the biosynthesis of azaterrilone A and other azaphilones, a class of fungal metabolites characterized by a highly oxygenated pyrano-quinone bicyclic core and exhibiting a broad range of bioactivities. The first step of the pathway begins with the non-reducing polyketide synthase tazA that assembles one acetyl-CoA starter unit, five malonyl-CoA units, and catalyzes a series of Claisen condensations, methylation, PT-mediated cyclization, and finally releases the first hexaketide precursor through the R-domain. The tazA product then undergoes reduction on its terminal ketone and the following pyran-ring formation by yet undetermined enzyme(s). Dehydration and enoyl reduction, possibly involving the trans-enoyl reductase tazE leads to the next intermediate. TazD is predicted as an acetyltransferase and might catalyze the acetylation steps leading to the synthesis of azaterrilone A. Azaterrilone A is not the final product of the taz pathway and both the highly reducing polyketide synthase tazB and the dual enzyme tazHJ catalyze late steps of the pathway, leading to the production of the 2 final stereoisomers that contain additional polyketide modification whose structures have still to be determined. This chain is FAD-dependent monooxygenase tazP, found in Aspergillus terreus (strain NIH 2624 / FGSC A1156).